A 368-amino-acid chain; its full sequence is Protein PXR1 (368 aa).

A disordered region spans residues 1-24 (MGLAGAKNKRKLGNDPNNTKWSRN). The segment covering 15-24 (DPNNTKWSRN) has biased composition (polar residues). One can recognise a G-patch domain in the interval 25–79 (TDTFGQKILRAQGWQPGEYLGAKDAAHAEWHTEANTTHIRVTLKDDTLGLGAKRN). Residues 144–337 (TPDEEAEEIP…GYSTPIPTGS (194 aa)) form a disordered region. Basic and acidic residues predominate over residues 176 to 186 (RRSDKEDDKLG). 2 stretches are compositionally biased toward basic residues: residues 187 to 196 (KKEKKSKKRK) and 257 to 277 (DKKRDKKEKKERRDKKEKKEK). Residues 310–337 (PSSAPTPTDSNSSTPTGSGYSTPIPTGS) are compositionally biased toward low complexity.

The protein belongs to the PINX1 family.

Its subcellular location is the nucleus. The protein localises to the nucleolus. Involved in rRNA-processing at A0, A1 and A2 sites and negatively regulates telomerase. The polypeptide is Protein PXR1 (PXR1) (Chaetomium globosum (strain ATCC 6205 / CBS 148.51 / DSM 1962 / NBRC 6347 / NRRL 1970) (Soil fungus)).